Consider the following 417-residue polypeptide: Tyrosine--tRNA ligase (417 aa).

Residue tyrosine 36 participates in L-tyrosine binding. The 'HIGH' region signature appears at 41–50; it reads PTADSLHIGH. L-tyrosine-binding residues include tyrosine 170 and glutamine 174. The 'KMSKS' region motif lies at 231-235; the sequence is KFGKS. Lysine 234 serves as a coordination point for ATP. The S4 RNA-binding domain occupies 351 to 417; that stretch reads TNLVELLIEA…GKKKYFMIIH (67 aa).

This sequence belongs to the class-I aminoacyl-tRNA synthetase family. TyrS type 1 subfamily. As to quaternary structure, homodimer.

Its subcellular location is the cytoplasm. It carries out the reaction tRNA(Tyr) + L-tyrosine + ATP = L-tyrosyl-tRNA(Tyr) + AMP + diphosphate + H(+). Its function is as follows. Catalyzes the attachment of tyrosine to tRNA(Tyr) in a two-step reaction: tyrosine is first activated by ATP to form Tyr-AMP and then transferred to the acceptor end of tRNA(Tyr). This chain is Tyrosine--tRNA ligase, found in Macrococcus caseolyticus (strain JCSC5402) (Macrococcoides caseolyticum).